An 80-amino-acid chain; its full sequence is MSCCGGNCGCGSGCKCVGCGGCKMYPDLSFSGETTTTETLVLGVAPAMNSQFEASGETFVAENDACKCGSDCKCNPCTCK.

Belongs to the metallothionein superfamily. Type 15 family.

In terms of biological role, metallothioneins have a high content of cysteine residues that bind various heavy metals. This chain is Metallothionein-like protein type 2, MT2-4/MT2-25, found in Brassica juncea (Indian mustard).